Reading from the N-terminus, the 192-residue chain is 7-methyl-GTP pyrophosphatase (192 aa).

The active-site Proton acceptor is the Asp-69.

This sequence belongs to the Maf family. YceF subfamily. Requires a divalent metal cation as cofactor.

It is found in the cytoplasm. The enzyme catalyses N(7)-methyl-GTP + H2O = N(7)-methyl-GMP + diphosphate + H(+). Functionally, nucleoside triphosphate pyrophosphatase that hydrolyzes 7-methyl-GTP (m(7)GTP). May have a dual role in cell division arrest and in preventing the incorporation of modified nucleotides into cellular nucleic acids. This chain is 7-methyl-GTP pyrophosphatase (maf-2), found in Pseudomonas putida (strain ATCC 47054 / DSM 6125 / CFBP 8728 / NCIMB 11950 / KT2440).